A 374-amino-acid polypeptide reads, in one-letter code: Lipoyl synthase, mitochondrial (374 aa).

The transit peptide at 1–19 directs the protein to the mitochondrion; sequence MHSRSALLYRFLRPASRCF. The [4Fe-4S] cluster site is built by cysteine 103, cysteine 108, cysteine 114, cysteine 134, cysteine 138, cysteine 141, and serine 350. The Radical SAM core domain maps to 119–339; sequence ETGTATATIM…RLLGMEMGFR (221 aa).

Belongs to the radical SAM superfamily. Lipoyl synthase family. The cofactor is [4Fe-4S] cluster. As to expression, expressed in leaves and flowers, but not in roots. Expressed in roots, rosette leaves, cauline leaves, stems, flowers and siliques.

The protein resides in the mitochondrion. It carries out the reaction [[Fe-S] cluster scaffold protein carrying a second [4Fe-4S](2+) cluster] + N(6)-octanoyl-L-lysyl-[protein] + 2 oxidized [2Fe-2S]-[ferredoxin] + 2 S-adenosyl-L-methionine + 4 H(+) = [[Fe-S] cluster scaffold protein] + N(6)-[(R)-dihydrolipoyl]-L-lysyl-[protein] + 4 Fe(3+) + 2 hydrogen sulfide + 2 5'-deoxyadenosine + 2 L-methionine + 2 reduced [2Fe-2S]-[ferredoxin]. It functions in the pathway protein modification; protein lipoylation via endogenous pathway; protein N(6)-(lipoyl)lysine from octanoyl-[acyl-carrier-protein]: step 2/2. Functionally, catalyzes the radical-mediated insertion of two sulfur atoms into the C-6 and C-8 positions of the octanoyl moiety bound to the lipoyl domains of lipoate-dependent enzymes, thereby converting the octanoylated domains into lipoylated derivatives. Together with LIP2 is essential for mitochondrial protein lipoylation during seed development. Required for the lipoylation of mitochondrial pyruvate dehydrogenase component E2 proteins in leaves and roots. The chain is Lipoyl synthase, mitochondrial from Arabidopsis thaliana (Mouse-ear cress).